Here is a 473-residue protein sequence, read N- to C-terminus: Aspartyl/glutamyl-tRNA(Asn/Gln) amidotransferase subunit B (473 aa).

It belongs to the GatB/GatE family. GatB subfamily. As to quaternary structure, heterotrimer of A, B and C subunits.

It catalyses the reaction L-glutamyl-tRNA(Gln) + L-glutamine + ATP + H2O = L-glutaminyl-tRNA(Gln) + L-glutamate + ADP + phosphate + H(+). It carries out the reaction L-aspartyl-tRNA(Asn) + L-glutamine + ATP + H2O = L-asparaginyl-tRNA(Asn) + L-glutamate + ADP + phosphate + 2 H(+). Its function is as follows. Allows the formation of correctly charged Asn-tRNA(Asn) or Gln-tRNA(Gln) through the transamidation of misacylated Asp-tRNA(Asn) or Glu-tRNA(Gln) in organisms which lack either or both of asparaginyl-tRNA or glutaminyl-tRNA synthetases. The reaction takes place in the presence of glutamine and ATP through an activated phospho-Asp-tRNA(Asn) or phospho-Glu-tRNA(Gln). The sequence is that of Aspartyl/glutamyl-tRNA(Asn/Gln) amidotransferase subunit B from Campylobacter hominis (strain ATCC BAA-381 / DSM 21671 / CCUG 45161 / LMG 19568 / NCTC 13146 / CH001A).